A 206-amino-acid chain; its full sequence is Ribosomal RNA small subunit methyltransferase G (206 aa).

S-adenosyl-L-methionine contacts are provided by residues Gly73, Leu78, 124-125 (VE), and Arg139.

This sequence belongs to the methyltransferase superfamily. RNA methyltransferase RsmG family.

Its subcellular location is the cytoplasm. The catalysed reaction is guanosine(527) in 16S rRNA + S-adenosyl-L-methionine = N(7)-methylguanosine(527) in 16S rRNA + S-adenosyl-L-homocysteine. In terms of biological role, specifically methylates the N7 position of guanine in position 527 of 16S rRNA. The protein is Ribosomal RNA small subunit methyltransferase G of Pectobacterium carotovorum subsp. carotovorum (strain PC1).